A 139-amino-acid polypeptide reads, in one-letter code: UPF0102 protein Caul_0175 (139 aa).

This sequence belongs to the UPF0102 family.

In Caulobacter sp. (strain K31), this protein is UPF0102 protein Caul_0175.